The chain runs to 256 residues: Trypsin, alkaline B (256 aa).

The N-terminal stretch at methionine 1–alanine 17 is a signal peptide. A propeptide spans valine 18 to arginine 24 (activation peptide). Residues isoleucine 25–serine 256 enclose the Peptidase S1 domain. A disulfide bond links cysteine 55 and cysteine 71. Residues histidine 70 and aspartate 115 each act as charge relay system in the active site. Intrachain disulfides connect cysteine 180-cysteine 197 and cysteine 209-cysteine 233. Serine 213 acts as the Charge relay system in catalysis.

The protein belongs to the peptidase S1 family. Midgut.

The protein localises to the secreted. It is found in the extracellular space. It carries out the reaction Preferential cleavage: Arg-|-Xaa, Lys-|-Xaa.. This is Trypsin, alkaline B from Manduca sexta (Tobacco hawkmoth).